The primary structure comprises 353 residues: Biotin synthase (353 aa).

Over residues M1 to P22 the composition is skewed to low complexity. Residues M1–S30 are disordered. Positions G72–R299 constitute a Radical SAM core domain. Residues C87, C91, and C94 each contribute to the [4Fe-4S] cluster site. Residues C131, C162, C222, and R294 each coordinate [2Fe-2S] cluster.

The protein belongs to the radical SAM superfamily. Biotin synthase family. As to quaternary structure, homodimer. [4Fe-4S] cluster is required as a cofactor. [2Fe-2S] cluster serves as cofactor.

The enzyme catalyses (4R,5S)-dethiobiotin + (sulfur carrier)-SH + 2 reduced [2Fe-2S]-[ferredoxin] + 2 S-adenosyl-L-methionine = (sulfur carrier)-H + biotin + 2 5'-deoxyadenosine + 2 L-methionine + 2 oxidized [2Fe-2S]-[ferredoxin]. It participates in cofactor biosynthesis; biotin biosynthesis; biotin from 7,8-diaminononanoate: step 2/2. Catalyzes the conversion of dethiobiotin (DTB) to biotin by the insertion of a sulfur atom into dethiobiotin via a radical-based mechanism. The polypeptide is Biotin synthase (Delftia acidovorans (strain DSM 14801 / SPH-1)).